Here is a 610-residue protein sequence, read N- to C-terminus: Mitochondrial import receptor subunit TOM70 (610 aa).

An N-acetylalanine modification is found at A2. Topologically, residues 2 to 41 are mitochondrial intermembrane; the sequence is AASKPVEAAMAAAAAPASGNGVGSSGGTAAPGSGAGTLPR. A helical transmembrane segment spans residues 42-62; sequence WHVALAIGAPLLLGAGAMYLW. Over 63-610 the chain is Cytoplasmic; the sequence is SRRRRRREAG…KKYGLKPPTL (548 aa). The interval 69–109 is disordered; it reads REAGGRGDASGLKRNSERKTPEGRASPALGSGPDGSGDSLE. R74 is subject to Omega-N-methylarginine. The span at 93 to 108 shows a compositional bias: low complexity; the sequence is ASPALGSGPDGSGDSL. Phosphoserine is present on residues S94, S99, S104, S107, and S112. TPR repeat units follow at residues 116–149 and 155–188; these read AQAA…CPTE and STFY…NPKY. N6-acetyllysine is present on K187. K277 is covalently cross-linked (Glycyl lysine isopeptide (Lys-Gly) (interchain with G-Cter in SUMO2)). TPR repeat units follow at residues 296–329, 331–364, 369–402, 403–436, 444–477, 478–511, 513–546, and 547–580; these read ENSG…QGKY, AEAL…KEAN, ANAL…DPMN, SDVY…RPKF, CFAL…FPRC, AEGY…EPDN, TTYV…DNKC, and DFAY…AKSE.

Belongs to the Tom70 family. In terms of assembly, forms part of the preprotein translocase complex of the outer mitochondrial membrane (TOM complex) which consists of at least 7 different proteins (TOMM5, TOMM6, TOMM7, TOMM20, TOMM22, TOMM40 and TOMM70). Interacts with CAPN8. Interacts with TRADD, TRAF6 and STING. Interacts with MAVS. Interacts with HSPA8 and HSP90AA1; both interactions are required for preprotein mitochondrial import. The interaction with HSP90AA1 is direct and mediates the association of TOMM70 with IRF3 and TBK1. Upon mitochondrial depolarization, interacts with PINK1; the interaction is required for PINK1-TOM-TIM23 supercomplex formation which is critical for PINK1 stabilization at the outer mitochondrial membrane, kinase activation and downstream mitophagy.

The protein localises to the mitochondrion outer membrane. Its function is as follows. Acts as a receptor of the preprotein translocase complex of the outer mitochondrial membrane (TOM complex). Recognizes and mediates the translocation of mitochondrial preproteins from the cytosol into the mitochondria in a chaperone dependent manner. Mediates TBK1 and IRF3 activation induced by MAVS in response to Sendai virus infection and promotes host antiviral responses during virus infection. The sequence is that of Mitochondrial import receptor subunit TOM70 from Rattus norvegicus (Rat).